The following is a 323-amino-acid chain: CIMIP2 protein CG18335 (323 aa).

This sequence belongs to the CIMIP2 family.

The protein localises to the cytoplasm. The protein resides in the cytoskeleton. It localises to the cilium axoneme. Functionally, probable microtubule inner protein (MIP) part of the dynein-decorated doublet microtubules (DMTs) in cilium axoneme. The polypeptide is CIMIP2 protein CG18335 (Drosophila melanogaster (Fruit fly)).